A 495-amino-acid polypeptide reads, in one-letter code: Protein painting of fourth (495 aa).

Positions 1-51 are disordered; sequence MDSKRAALESGDGPDAKRLDTTDDQDKEASGGDGSQVMLAKHVAPYTGHGC. One can recognise an RRM domain in the interval 215–289; sequence CSLYVGNIPF…RTLTVRYRRL (75 aa). A compositionally biased stretch (low complexity) spans 332-342; the sequence is ISDSDNCSDSS. Disordered stretches follow at residues 332 to 358, 432 to 451, and 461 to 495; these read ISDSDNCSDSSGNGKEDGKRKKKINEQ, PVPATKPTTQAQDDSQKKAK, and GPFRRGTSAMKTADEYEKDDRLEELYAQLERDPDP. Residues 345-358 show a composition bias toward basic and acidic residues; the sequence is GKEDGKRKKKINEQ. The Bipartite nuclear localization signal signature appears at 351–367; it reads RKKKINEQEREIEKLKR. The segment covering 472-495 has biased composition (basic and acidic residues); the sequence is TADEYEKDDRLEELYAQLERDPDP.

Interacts with Zeste. As to expression, weakly expressed in embryos. Expression increases during larval and pupal stages. In adults, it is predominantly expressed in males, while it is weakly expressed in females.

It is found in the nucleus. The protein localises to the chromosome. Functionally, probable RNA-binding protein that specifically binds to the fourth chromosome and may bind an RNA that spreads the fourth chromosome. May be a reminiscence of X chromosome dosage compensation of ancestral Drosophila species in which the X and the fourth chromosomes are one single chromosome. The chain is Protein painting of fourth (Pof) from Drosophila melanogaster (Fruit fly).